The primary structure comprises 338 residues: Fructose-1,6-bisphosphatase class 1 (338 aa).

Mg(2+) contacts are provided by Glu-92, Asp-115, Leu-117, and Asp-118. Residues 118 to 121 (DGSS), Asn-211, Tyr-244, 262 to 264 (YLY), and Lys-274 each bind substrate. Glu-280 is a binding site for Mg(2+).

It belongs to the FBPase class 1 family. In terms of assembly, homotetramer. The cofactor is Mg(2+).

It localises to the cytoplasm. The enzyme catalyses beta-D-fructose 1,6-bisphosphate + H2O = beta-D-fructose 6-phosphate + phosphate. It functions in the pathway carbohydrate biosynthesis; gluconeogenesis. In Vibrio parahaemolyticus serotype O3:K6 (strain RIMD 2210633), this protein is Fructose-1,6-bisphosphatase class 1.